Here is a 238-residue protein sequence, read N- to C-terminus: 1-(5-phosphoribosyl)-5-[(5-phosphoribosylamino)methylideneamino] imidazole-4-carboxamide isomerase (238 aa).

The Proton acceptor role is filled by Asp-8. The active-site Proton donor is Asp-130.

The protein belongs to the HisA/HisF family.

The protein localises to the cytoplasm. The enzyme catalyses 1-(5-phospho-beta-D-ribosyl)-5-[(5-phospho-beta-D-ribosylamino)methylideneamino]imidazole-4-carboxamide = 5-[(5-phospho-1-deoxy-D-ribulos-1-ylimino)methylamino]-1-(5-phospho-beta-D-ribosyl)imidazole-4-carboxamide. The protein operates within amino-acid biosynthesis; L-histidine biosynthesis; L-histidine from 5-phospho-alpha-D-ribose 1-diphosphate: step 4/9. In Methanococcus vannielii (strain ATCC 35089 / DSM 1224 / JCM 13029 / OCM 148 / SB), this protein is 1-(5-phosphoribosyl)-5-[(5-phosphoribosylamino)methylideneamino] imidazole-4-carboxamide isomerase.